The sequence spans 135 residues: Small ribosomal subunit protein bS6 (135 aa).

The interval 98-135 (EASPMAKAKDERDARRAAISERSSEADEVEENAEESAE) is disordered. A compositionally biased stretch (basic and acidic residues) spans 104–122 (KAKDERDARRAAISERSSE). Acidic residues predominate over residues 123-135 (ADEVEENAEESAE).

This sequence belongs to the bacterial ribosomal protein bS6 family.

Binds together with bS18 to 16S ribosomal RNA. This Shewanella amazonensis (strain ATCC BAA-1098 / SB2B) protein is Small ribosomal subunit protein bS6.